The primary structure comprises 1235 residues: DNA polymerase catalytic subunit (1235 aa).

Disordered stretches follow at residues 640 to 692 (QGRF…TAGR) and 1098 to 1134 (ATAPGDEPAPPAALPCPAKRPRETPSHADPPGGASKP). A compositionally biased stretch (basic and acidic residues) spans 650–661 (APKRPAAAREDE). A compositionally biased stretch (acidic residues) spans 662–675 (ERPEEEGEDEDERE). Residues 676 to 691 (EGGGEREPEGARETAG) are compositionally biased toward basic and acidic residues.

Belongs to the DNA polymerase type-B family. As to quaternary structure, forms a complex with the ssDNA-binding protein UL29, the DNA polymerase processivity factor, and the alkaline exonuclease. Interacts with the putative helicase-primase complex subunit UL8; this interaction may coordinate leading and lagging strand DNA synthesis at the replication fork.

The protein localises to the host nucleus. The enzyme catalyses DNA(n) + a 2'-deoxyribonucleoside 5'-triphosphate = DNA(n+1) + diphosphate. It catalyses the reaction Endonucleolytic cleavage to 5'-phosphomonoester.. Functionally, replicates viral genomic DNA. The replication complex is composed of six viral proteins: the DNA polymerase, processivity factor, primase, primase-associated factor, helicase, and ssDNA-binding protein. Additionally, the polymerase contains an intrinsic ribonuclease H (RNase H) activity that specifically degrades RNA/DNA heteroduplexes or duplex DNA substrates in the 5' to 3' direction. Therefore, it can catalyze the excision of the RNA primers that initiate the synthesis of Okazaki fragments at a replication fork during viral DNA replication. This is DNA polymerase catalytic subunit from Human herpesvirus 1 (strain Angelotti) (HHV-1).